The chain runs to 474 residues: Methylenetetrahydrofolate--tRNA-(uracil-5-)-methyltransferase TrmFO (474 aa).

15 to 20 is an FAD binding site; that stretch reads GAGLAG. The tract at residues 453–474 is disordered; the sequence is PLLPTAPDTTGAAGEETTQAES.

The protein belongs to the MnmG family. TrmFO subfamily. It depends on FAD as a cofactor.

The protein resides in the cytoplasm. It catalyses the reaction uridine(54) in tRNA + (6R)-5,10-methylene-5,6,7,8-tetrahydrofolate + NADH + H(+) = 5-methyluridine(54) in tRNA + (6S)-5,6,7,8-tetrahydrofolate + NAD(+). It carries out the reaction uridine(54) in tRNA + (6R)-5,10-methylene-5,6,7,8-tetrahydrofolate + NADPH + H(+) = 5-methyluridine(54) in tRNA + (6S)-5,6,7,8-tetrahydrofolate + NADP(+). Catalyzes the folate-dependent formation of 5-methyl-uridine at position 54 (M-5-U54) in all tRNAs. The chain is Methylenetetrahydrofolate--tRNA-(uracil-5-)-methyltransferase TrmFO from Nitratidesulfovibrio vulgaris (strain ATCC 29579 / DSM 644 / CCUG 34227 / NCIMB 8303 / VKM B-1760 / Hildenborough) (Desulfovibrio vulgaris).